Consider the following 667-residue polypeptide: Probable E3 ubiquitin-protein ligase HIP1 (667 aa).

Disordered stretches follow at residues 142 to 163 and 285 to 311; these read NGAS…NGQA and TTAG…RSFR. A compositionally biased stretch (low complexity) spans 288–309; sequence GLSSSSYDPSGGNNNSGGSQRS. The segment at 620–661 adopts an RING-type; atypical zinc-finger fold; that stretch reads CCICQEEYVDGDDLGTLDCGHDFHVGCVRQWLVVKNTCPICK.

The protein belongs to the RING-type zinc finger family. In terms of assembly, interacts with HAL3.

The enzyme catalyses S-ubiquitinyl-[E2 ubiquitin-conjugating enzyme]-L-cysteine + [acceptor protein]-L-lysine = [E2 ubiquitin-conjugating enzyme]-L-cysteine + N(6)-ubiquitinyl-[acceptor protein]-L-lysine.. It functions in the pathway protein modification; protein ubiquitination. Its function is as follows. Probable E3 ubiquitin-protein ligase that functions downstream of HAL3 and is required for HAL3-regulated plant growth. Activation of HIP1 by HAL3 may lead to the degradation of cell cycle suppressors, resulting in enhancement of cell division and plant growth. The polypeptide is Probable E3 ubiquitin-protein ligase HIP1 (HIP1) (Oryza sativa subsp. japonica (Rice)).